The primary structure comprises 460 residues: MNLTSPKVSTMFFDQIITVTDHNVTWEKIQNCLYNLYGEATYNSWLSSLKFVSSRNGEVLLSVSTRFIKEWITVHYMKKILSLWQSEDKSIRSIDIQVIEERNSNFNVILKNREESNHNLGSPLDPRFTFDNFVVGKPNELAFTAAKRVAESIDPILGSNPLFLYGGVGLGKTHLMHAIAWHIVNSPSAKRKVVYLSAEKFMYQYITALRSKDIMLFKEQFRSVDVLMVDDVQFISGKDSTQEEFFHTFNALIDQNKQLVISADRSPSDLDGVEERIKSRLGWGLVADINETTFELRLGILQAKVEQMNMYVPKDVLEFLARNIKSNIRELEGALNKVTHTSLIGRSMTVESASETLIDLLRSNHRSVTIEEIQKKVAEFFNIKVADMQSNRRLRSLARPRQIAMYFAKKFTQKSLPDIGRNFGGRDHATVIHAVKQVENFIKTDSKFADEINRLKKMFK.

The interval 1-91 (MNLTSPKVST…SLWQSEDKSI (91 aa)) is domain I, interacts with DnaA modulators. Positions 91–122 (IRSIDIQVIEERNSNFNVILKNREESNHNLGS) are domain II. Residues 123 to 342 (PLDPRFTFDN…GALNKVTHTS (220 aa)) form a domain III, AAA+ region region. Gly169, Gly171, Lys172, and Thr173 together coordinate ATP. Residues 343–460 (LIGRSMTVES…EINRLKKMFK (118 aa)) are domain IV, binds dsDNA.

This sequence belongs to the DnaA family. As to quaternary structure, oligomerizes as a right-handed, spiral filament on DNA at oriC.

It is found in the cytoplasm. Plays an essential role in the initiation and regulation of chromosomal replication. ATP-DnaA binds to the origin of replication (oriC) to initiate formation of the DNA replication initiation complex once per cell cycle. Binds the DnaA box (a 9 base pair repeat at the origin) and separates the double-stranded (ds)DNA. Forms a right-handed helical filament on oriC DNA; dsDNA binds to the exterior of the filament while single-stranded (ss)DNA is stabiized in the filament's interior. The ATP-DnaA-oriC complex binds and stabilizes one strand of the AT-rich DNA unwinding element (DUE), permitting loading of DNA polymerase. After initiation quickly degrades to an ADP-DnaA complex that is not apt for DNA replication. Binds acidic phospholipids. This is Chromosomal replication initiator protein DnaA from Wolbachia pipientis wMel.